Here is a 165-residue protein sequence, read N- to C-terminus: Small ribosomal subunit protein uS5 (165 aa).

The region spanning 13-76 (LEEKVLVVNR…DAARKNLVSI (64 aa)) is the S5 DRBM domain.

Belongs to the universal ribosomal protein uS5 family. As to quaternary structure, part of the 30S ribosomal subunit. Contacts proteins S4 and S8.

Functionally, with S4 and S12 plays an important role in translational accuracy. Located at the back of the 30S subunit body where it stabilizes the conformation of the head with respect to the body. The protein is Small ribosomal subunit protein uS5 of Chlamydia muridarum (strain MoPn / Nigg).